The sequence spans 396 residues: Elongation factor Tu (396 aa).

The tr-type G domain maps to 10-206 (KPHVNVGTIG…AVDAYIPTPQ (197 aa)). The interval 19-26 (GHVDHGKT) is G1. A GTP-binding site is contributed by 19-26 (GHVDHGKT). Residue Thr26 participates in Mg(2+) binding. The tract at residues 60-64 (GITIA) is G2. The tract at residues 81–84 (DCPG) is G3. Residues 81 to 85 (DCPGH) and 136 to 139 (NKVD) contribute to the GTP site. The tract at residues 136–139 (NKVD) is G4. Residues 174 to 176 (SAL) are G5.

It belongs to the TRAFAC class translation factor GTPase superfamily. Classic translation factor GTPase family. EF-Tu/EF-1A subfamily. In terms of assembly, monomer.

The protein localises to the cytoplasm. It catalyses the reaction GTP + H2O = GDP + phosphate + H(+). Its function is as follows. GTP hydrolase that promotes the GTP-dependent binding of aminoacyl-tRNA to the A-site of ribosomes during protein biosynthesis. This Anaeromyxobacter dehalogenans (strain 2CP-C) protein is Elongation factor Tu.